Reading from the N-terminus, the 278-residue chain is DegV domain-containing protein YejH (278 aa).

Residues 3–277 (IKIVTDSSIT…PGAWAIMIDY (275 aa)) form the DegV domain. Threonine 60 and serine 92 together coordinate hexadecanoate.

In terms of biological role, may bind long-chain fatty acids, such as palmitate, and may play a role in lipid transport or fatty acid metabolism. The protein is DegV domain-containing protein YejH (yejH) of Lactococcus lactis subsp. lactis (strain IL1403) (Streptococcus lactis).